Consider the following 470-residue polypeptide: Bifunctional protein ArgHA (470 aa).

Residues 1–470 are argininosuccinate lyase; that stretch reads MALWGGRFSQ…TSGISIRAAR (470 aa).

It in the N-terminal section; belongs to the lyase 1 family. Argininosuccinate lyase subfamily. This sequence in the C-terminal section; belongs to the acetyltransferase family. ArgA subfamily.

The protein localises to the cytoplasm. It catalyses the reaction 2-(N(omega)-L-arginino)succinate = fumarate + L-arginine. The catalysed reaction is L-glutamate + acetyl-CoA = N-acetyl-L-glutamate + CoA + H(+). It functions in the pathway amino-acid biosynthesis; L-arginine biosynthesis; N(2)-acetyl-L-ornithine from L-glutamate: step 1/4. Its pathway is amino-acid biosynthesis; L-arginine biosynthesis; L-arginine from L-ornithine and carbamoyl phosphate: step 3/3. The polypeptide is Bifunctional protein ArgHA (argHA) (Moritella profunda).